The primary structure comprises 185 residues: Protein GrpE (185 aa).

The segment covering 1 to 11 has biased composition (polar residues); that stretch reads MENTQENPTDQ. Positions 1-38 are disordered; sequence MENTQENPTDQTTEETGREAQAAEPAAQAAENAAPAAE. Residues 19–38 show a composition bias toward low complexity; that stretch reads EAQAAEPAAQAAENAAPAAE.

Belongs to the GrpE family. As to quaternary structure, homodimer.

The protein localises to the cytoplasm. Participates actively in the response to hyperosmotic and heat shock by preventing the aggregation of stress-denatured proteins, in association with DnaK and GrpE. It is the nucleotide exchange factor for DnaK and may function as a thermosensor. Unfolded proteins bind initially to DnaJ; upon interaction with the DnaJ-bound protein, DnaK hydrolyzes its bound ATP, resulting in the formation of a stable complex. GrpE releases ADP from DnaK; ATP binding to DnaK triggers the release of the substrate protein, thus completing the reaction cycle. Several rounds of ATP-dependent interactions between DnaJ, DnaK and GrpE are required for fully efficient folding. The chain is Protein GrpE from Burkholderia mallei (strain NCTC 10247).